The sequence spans 251 residues: Fibroblast growth factor-binding protein 1 (251 aa).

Positions 1–20 (MRLHSLILLSFLLLATQAFS) are cleaved as a signal peptide. Residues 25–62 (KRAKNAPHSTAEEGVEGSAPSLGKAQNKQRSRTSKSLT) form a disordered region. 3 disulfide bridges follow: Cys-74/Cys-91, Cys-100/Cys-133, and Cys-109/Cys-145. The interval 160–189 (NARGNTKPRKEKAEVSAREHNKVQEAVSTE) is disordered. The span at 170 to 182 (EKAEVSAREHNKV) shows a compositional bias: basic and acidic residues. Ser-175 carries an O-linked (GalNAc...) serine glycan. Residues 210–251 (RDPECLEDPDVLNQRKTALEFCGESWSSICTFFLNMLQATSC) form a sufficient for interaction with FGF2 and FGF2-induced effects region. 2 cysteine pairs are disulfide-bonded: Cys-214-Cys-251 and Cys-231-Cys-239.

The protein belongs to the fibroblast growth factor-binding protein family. As to quaternary structure, found in a complex with FGFBP1, FGF1 and FGF2. Interacts with FGF1, FGF7, FGF10, FGF22 and HSPG2. Interacts with FGF2. As to expression, expressed in intestine, ovary, lung, placenta and normal and wounded skin.

The protein resides in the secreted. It localises to the extracellular space. It is found in the cell membrane. Acts as a carrier protein that releases fibroblast-binding factors (FGFs) from the extracellular matrix (EM) storage and thus enhances the mitogenic activity of FGFs. Enhances FGF2 signaling during tissue repair, angiogenesis and in tumor growth. This Mus musculus (Mouse) protein is Fibroblast growth factor-binding protein 1 (Fgfbp1).